The primary structure comprises 1663 residues: Centrosomal protein of 152 kDa (1663 aa).

The interval 1-60 (MSIDFDSGALQTQQEDEEYDKEDYAREQELQQLLTDLPHDMLDDSLSSSPEPSYSDCSGH) is disordered. Residues 44-57 (DSLSSSPEPSYSDC) are compositionally biased toward low complexity. Coiled-coil stretches lie at residues 266-516 (LQVL…ARLG), 571-664 (ELER…KHLL), 696-796 (QDKK…VTAK), 843-886 (SDCI…VEVA), 946-977 (DFTV…ALLK), 1014-1047 (RNKL…AERL), and 1182-1288 (VQQL…KNDM). Disordered stretches follow at residues 1383–1408 (ETTQ…NQNI) and 1595–1628 (KRKD…SDVG). The span at 1603–1613 (RKYSNKIQEPS) shows a compositional bias: polar residues.

This sequence belongs to the CEP152 family.

It is found in the cytoplasm. The protein resides in the cytoskeleton. It localises to the microtubule organizing center. Its subcellular location is the centrosome. The protein localises to the centriole. Functionally, necessary for centrosome duplication; the function also seems to involve cep63, cdk5rap2 and wdr62 through a stepwise assembled complex at the centrosome that recruits cdk2 required for centriole duplication. Acts as a molecular scaffold facilitating the interaction of plk4 and cpap, 2 molecules involved in centriole formation. Also plays a key role in deuterosome-mediated centriole amplification in multiciliated that can generate more than 100 centrioles. Overexpression of cep152 can drive amplification of centrioles. In Xenopus laevis (African clawed frog), this protein is Centrosomal protein of 152 kDa (cep152).